A 109-amino-acid chain; its full sequence is Elicitor peptide 2 (109 aa).

Positions 1–73 (MEKLDKRREE…KDDDVVVLLR (73 aa)) are excised as a propeptide. The span at 74–88 (DNKAKSKKRDKEKPS) shows a compositional bias: basic and acidic residues. The disordered stretch occupies residues 74-109 (DNKAKSKKRDKEKPSSGRPGQTNSVPNAAIQVYKED).

The protein belongs to the brassicaceae elicitor peptide family.

In terms of biological role, elicitor of plant defense. This Arabidopsis thaliana (Mouse-ear cress) protein is Elicitor peptide 2 (PEP2).